Reading from the N-terminus, the 222-residue chain is Phosphoribosylformylglycinamidine synthase subunit PurQ (222 aa).

Residues 2 to 222 form the Glutamine amidotransferase type-1 domain; it reads RTAVIQFPGS…FESLKGALVQ (221 aa). Cys87 (nucleophile) is an active-site residue. Active-site residues include His195 and Glu197.

As to quaternary structure, part of the FGAM synthase complex composed of 1 PurL, 1 PurQ and 2 PurS subunits.

It is found in the cytoplasm. It catalyses the reaction N(2)-formyl-N(1)-(5-phospho-beta-D-ribosyl)glycinamide + L-glutamine + ATP + H2O = 2-formamido-N(1)-(5-O-phospho-beta-D-ribosyl)acetamidine + L-glutamate + ADP + phosphate + H(+). The enzyme catalyses L-glutamine + H2O = L-glutamate + NH4(+). It participates in purine metabolism; IMP biosynthesis via de novo pathway; 5-amino-1-(5-phospho-D-ribosyl)imidazole from N(2)-formyl-N(1)-(5-phospho-D-ribosyl)glycinamide: step 1/2. Functionally, part of the phosphoribosylformylglycinamidine synthase complex involved in the purines biosynthetic pathway. Catalyzes the ATP-dependent conversion of formylglycinamide ribonucleotide (FGAR) and glutamine to yield formylglycinamidine ribonucleotide (FGAM) and glutamate. The FGAM synthase complex is composed of three subunits. PurQ produces an ammonia molecule by converting glutamine to glutamate. PurL transfers the ammonia molecule to FGAR to form FGAM in an ATP-dependent manner. PurS interacts with PurQ and PurL and is thought to assist in the transfer of the ammonia molecule from PurQ to PurL. The polypeptide is Phosphoribosylformylglycinamidine synthase subunit PurQ (Deinococcus geothermalis (strain DSM 11300 / CIP 105573 / AG-3a)).